The chain runs to 403 residues: Solanesyl-diphosphate synthase 2, chloroplastic (403 aa).

The transit peptide at Met1 to Pro62 directs the protein to the chloroplast. Residues Lys123, Arg126, and His161 each contribute to the isopentenyl diphosphate site. Residues Asp168 and Asp172 each coordinate Mg(2+). Arg177 is a binding site for an all-trans-polyprenyl diphosphate. Position 178 (Arg178) interacts with isopentenyl diphosphate. Lys254, Thr255, Gln292, and Lys309 together coordinate an all-trans-polyprenyl diphosphate.

This sequence belongs to the FPP/GGPP synthase family. In terms of assembly, homodimer. Interacts with FBN5. It depends on Mg(2+) as a cofactor. As to expression, expressed in leaves, stems and roots. Highest expression in leaves and roots.

The protein localises to the plastid. Its subcellular location is the chloroplast. It carries out the reaction 7 isopentenyl diphosphate + (2E)-geranyl diphosphate = all-trans-nonaprenyl diphosphate + 7 diphosphate. Its function is as follows. Involved in providing solanesyl diphosphate for plastoquinone-9 (PQ-9) formation. Geranyl diphosphate is the preferred substrate. In Oryza sativa subsp. japonica (Rice), this protein is Solanesyl-diphosphate synthase 2, chloroplastic.